A 429-amino-acid chain; its full sequence is MFLRPSTLLLTLFLALVAGSAIRKDVDEFDSNKGKDGIVDGDIMLTEAQLRILNGTAKRSKRQITKIWKKWPDAKVFYYYENEFTSLKRELMSYAMAHISSNTCVKFQESNSATNRIRFTNTGGCASYIGMNGGEQTLWFGDGCLIFGTAVHEIMHSLGLFHTHSRFDRDNFLSVSYKDVPENMVGNLEKETEQTTYNAVPFEYGSTMLYRYNTFGEGTLVSKNEDYQKTMGLRRVSFYDLVNINVRYSCGCAKSLTCENGGYTNPSNCATCVCPTGFAGTLCNEAPSNTIKLTAESYWKGYWVNFGYSTSIQTTNYYLAYLWITAPADKTIEVKIMDLSGFTCSYGCNYNGVEVKYMGDPRITNPLRCCAQDTEYLNQVISSKQNPTPIVMQQRYGSSKLTIHYRYVDTPLSSNKKSTNGYDNYQYYV.

The first 21 residues, 1–21, serve as a signal peptide directing secretion; that stretch reads MFLRPSTLLLTLFLALVAGSA. Residue N54 is glycosylated (N-linked (GlcNAc...) asparagine). A Peptidase M12A domain is found at 62 to 251; sequence RQITKIWKKW…VNINVRYSCG (190 aa). Cystine bridges form between C104–C250, C125–C144, C252–C272, and C274–C283. H152 serves as a coordination point for Zn(2+). Residue E153 is part of the active site. Zn(2+) contacts are provided by H156 and H162. One can recognise an EGF-like domain in the interval 245 to 284; it reads NVRYSCGCAKSLTCENGGYTNPSNCATCVCPTGFAGTLCN.

It depends on Zn(2+) as a cofactor.

It localises to the secreted. Functionally, metalloprotease. The chain is Zinc metalloproteinase nas-17 (nas-17) from Caenorhabditis elegans.